Reading from the N-terminus, the 292-residue chain is ATP synthase gamma chain (292 aa).

It belongs to the ATPase gamma chain family. As to quaternary structure, F-type ATPases have 2 components, CF(1) - the catalytic core - and CF(0) - the membrane proton channel. CF(1) has five subunits: alpha(3), beta(3), gamma(1), delta(1), epsilon(1). CF(0) has three main subunits: a, b and c.

It is found in the cell membrane. Produces ATP from ADP in the presence of a proton gradient across the membrane. The gamma chain is believed to be important in regulating ATPase activity and the flow of protons through the CF(0) complex. This is ATP synthase gamma chain from Streptococcus pneumoniae serotype 2 (strain D39 / NCTC 7466).